A 306-amino-acid chain; its full sequence is Ribosomal protein L11 methyltransferase (306 aa).

S-adenosyl-L-methionine contacts are provided by Thr-154, Gly-179, Asp-201, and Asn-242.

This sequence belongs to the methyltransferase superfamily. PrmA family.

Its subcellular location is the cytoplasm. It carries out the reaction L-lysyl-[protein] + 3 S-adenosyl-L-methionine = N(6),N(6),N(6)-trimethyl-L-lysyl-[protein] + 3 S-adenosyl-L-homocysteine + 3 H(+). Its function is as follows. Methylates ribosomal protein L11. In Xylella fastidiosa (strain Temecula1 / ATCC 700964), this protein is Ribosomal protein L11 methyltransferase.